An 811-amino-acid chain; its full sequence is Potassium transporter 27 (811 aa).

Topologically, residues 1–64 (MGDDVLGRGS…QEESWARTLK (64 aa)) are cytoplasmic. Residues 65 to 85 (LAFQCVGILYGDIGTSPLFVY) traverse the membrane as a helical segment. The Extracellular segment spans residues 86 to 102 (SSTFKDGVRHPDDLLGA). Residues 103-123 (LSLIIYSFALFTIVKYVFIAL) form a helical membrane-spanning segment. Topologically, residues 124-188 (RANDDGDGGT…ELLETNRAVK (65 aa)) are cytoplasmic. Residues 189-209 (IWLFLLTILATAMVISDAVLT) traverse the membrane as a helical segment. Over 210–226 (PAISVLSAVGGLKEKAP) the chain is Extracellular. Residues 227–247 (NLTTDEIVWITVATLVVLFAI) form a helical membrane-spanning segment. At 248-254 (QRFGTDK) the chain is on the cytoplasmic side. The helical transmembrane segment at 255–275 (IGYLFAPIILLWLLLIGCVGI) threads the bilayer. Residues 276–310 (YNTIKFDTGVLRAFNLKYIIDYFRRNKKDGWISLS) are Extracellular-facing. Residues 311–331 (GILLCFTGTEALFSDLGYFSI) form a helical membrane-spanning segment. Over 332 to 335 (RSIQ) the chain is Cytoplasmic. The chain crosses the membrane as a helical span at residues 336–356 (LSFSFGLVPSVLLAYIGQAAY). At 357-375 (LREHPEHIANTFYRSTPNV) the chain is on the extracellular side. The helical transmembrane segment at 376-396 (MFWPTFILAVAASIIGSQAMI) threads the bilayer. Over 397-434 (SCAFATISHLQTLNCFPRVKILHTSRQYSGQLYIPEVN) the chain is Cytoplasmic. Residues 435 to 455 (FLLCVGACLVTIGFKTTVIIG) traverse the membrane as a helical segment. The Extracellular segment spans residues 456-459 (EAHA). The helical transmembrane segment at 460–480 (ICVVFVMIITTLLLTIVMLLV) threads the bilayer. At 481-482 (WK) the chain is on the cytoplasmic side. The chain crosses the membrane as a helical span at residues 483–503 (VSIWYVALFFIVFMSSESIYL). Residues 504-515 (SAVLYQFVHGEY) are Extracellular-facing. A helical membrane pass occupies residues 516-536 (VPVAMSVFLMIVMTVWHYVHV). Residues 537-811 (KRYEFELEHT…VLKVGIAYEI (275 aa)) are Cytoplasmic-facing.

This sequence belongs to the HAK/KUP transporter (TC 2.A.72.3) family.

It localises to the membrane. High-affinity potassium transporter. The polypeptide is Potassium transporter 27 (HAK27) (Oryza sativa subsp. japonica (Rice)).